A 1092-amino-acid chain; its full sequence is DNA polymerase delta catalytic subunit (1092 aa).

The tract at residues 1 to 71 is disordered; the sequence is MDGKRKFNGT…SRPPPPELDP (71 aa). A Nuclear localization signal motif is present at residues 4–19; that stretch reads KRKFNGTSNGHAKKPR. Zn(2+)-binding residues include Cys997, Cys1000, Cys1014, and Cys1017. The CysA-type zinc finger occupies 997–1017; the sequence is CLGCKSLMPKGYEQACLCPHC. 4 residues coordinate [4Fe-4S] cluster: Cys1046, Cys1049, Cys1059, and Cys1064. A CysB motif motif is present at residues 1046–1064; that stretch reads CQRCQESLHEEVICSNRDC.

Belongs to the DNA polymerase type-B family. Catalytic component of the DNA polymerase delta complex consisting of three subunits: the catalytic subunit PolD1 and two accessory subunits PolD2/Pol31 and PolD3/Pol32. Within the delta complex, interacts with both PolD2 and PolD3, and is able to interact with PolD2 in the absence of PolD3. Interacts with PCNA and PCNA2. [4Fe-4S] cluster serves as cofactor. It depends on Mg(2+) as a cofactor. As to expression, expressed in ovaries (at the protein level). Expressed in embryos (at the protein level).

It is found in the nucleus. It localises to the nucleoplasm. It carries out the reaction DNA(n) + a 2'-deoxyribonucleoside 5'-triphosphate = DNA(n+1) + diphosphate. With respect to regulation, inhibited by KCL. Also inhibited by carbonyldiphosphonate, aphidicolin and N-ethylmaleimide (NEM). Functionally, as the catalytic component of the DNA polymerase delta complex, plays a crucial role in high fidelity genome replication, including lagging strand synthesis, DNA recombination and repair. Exhibits both DNA polymerase and 3'- to 5'-exonuclease activities. Required at the nucleus of rapidly dividing embryonic cells to activate genome replication during the earliest cell cycles. Likely to require the presence of accessory proteins PolD2 and PolD3 for full activity. This is DNA polymerase delta catalytic subunit from Drosophila melanogaster (Fruit fly).